The sequence spans 62 residues: Small polypeptide DEVIL 17 (62 aa).

Positions 27–58 (RRNKGCLAMVKERRSRFYIARRCILMLLCWHK) are required for DVL/RTFL small polypeptide activity. A helical membrane pass occupies residues 39-56 (RRSRFYIARRCILMLLCW).

The protein belongs to the DVL/RTFL small polypeptides family.

It is found in the cell membrane. Functionally, small polypeptide acting as a regulatory molecule which coordinates cellular responses required for differentiation, growth and development, probably by restricting polar cell proliferation in lateral organs and coordinating socket cell recruitment and differentiation at trichome sites. In Arabidopsis thaliana (Mouse-ear cress), this protein is Small polypeptide DEVIL 17.